The sequence spans 141 residues: Bombinins BLP-7/H-BO (141 aa).

The signal sequence occupies residues 1–18 (MNFKYIIAVSFLIASTYA). A propeptide spanning residues 19–43 (RSVKNDEQSLSQRDVLDEESLREIR) is cleaved from the precursor. Asparagine 70 carries the asparagine amide modification. A propeptide spanning residues 74 to 123 (TAEEHEVMKRLEAVMRDLDSLDHPEEASEKETRGFNQEEIANLFTKKEKR) is cleaved from the precursor. Leucine 140 is subject to Leucine amide.

The protein belongs to the bombinin family. In terms of tissue distribution, expressed by the skin glands.

The protein localises to the secreted. Antimicrobial peptide with activity against Gram-positive and -negative bacteria and fungi. Shows activity against P.acnes (MIC=5 uM), E.coli (MIC=5-6.3 uM), S.aureus (MIC=5-6.3 uM), M.luteus, S.cerevisiae and C.albicans (MIC=10-12.5 uM). Also reduces the production of interleukin (IL)-8 and granulocyte-macrophage colony stimulating factor (CSF2) in normal human epidermal keratinocytes (NHEKs). Shows anticancer activity against three human hepatoma cell lines. In vivo, using the rat ear edema model, suppress P.acnes-induced skin inflammation, significantly reducing the ear thickness. Shows weak hemolytic activity against human erythrocytes. Functionally, shows weak antimicrobial activity (tested on E.coli, S.aureus and C.albicans). Shows high hemolytic activity against human erythrocytes (38% erythrocyte lysis at 80.0 uM, and up to 85% at 159.7 uM). This Bombina orientalis (Oriental fire-bellied toad) protein is Bombinins BLP-7/H-BO.